Here is a 113-residue protein sequence, read N- to C-terminus: ATP-dependent Clp protease adapter protein ClpS (113 aa).

Pro residues predominate over residues 1–11 (MTRPTIPPGPP). Disordered regions lie at residues 1-24 (MTRPTIPPGPPGAEGRTQTLERTE) and 92-113 (TAHAQREGHPLRVVAEPESEGE).

It belongs to the ClpS family. As to quaternary structure, binds to the N-terminal domain of the chaperone ClpA.

In terms of biological role, involved in the modulation of the specificity of the ClpAP-mediated ATP-dependent protein degradation. This chain is ATP-dependent Clp protease adapter protein ClpS, found in Deinococcus radiodurans (strain ATCC 13939 / DSM 20539 / JCM 16871 / CCUG 27074 / LMG 4051 / NBRC 15346 / NCIMB 9279 / VKM B-1422 / R1).